The sequence spans 143 residues: NADH-quinone oxidoreductase subunit A (143 aa).

Transmembrane regions (helical) follow at residues 8–28, 63–83, and 90–110; these read FGNVFAFLALGIVFVAGGYLT, FYVVALIFIIFDVEVVFLYPW, and LGVFALVEVLVFAGILILGLV.

This sequence belongs to the complex I subunit 3 family. NDH-1 is composed of 14 different subunits. Subunits NuoA, H, J, K, L, M, N constitute the membrane sector of the complex.

It is found in the cell inner membrane. The enzyme catalyses a quinone + NADH + 5 H(+)(in) = a quinol + NAD(+) + 4 H(+)(out). Its function is as follows. NDH-1 shuttles electrons from NADH, via FMN and iron-sulfur (Fe-S) centers, to quinones in the respiratory chain. The immediate electron acceptor for the enzyme in this species is believed to be a menaquinone. Couples the redox reaction to proton translocation (for every two electrons transferred, four hydrogen ions are translocated across the cytoplasmic membrane), and thus conserves the redox energy in a proton gradient. The protein is NADH-quinone oxidoreductase subunit A of Chlorobium phaeobacteroides (strain DSM 266 / SMG 266 / 2430).